Here is a 246-residue protein sequence, read N- to C-terminus: Large ribosomal subunit protein uL30-like 1 (246 aa).

The residue at position 54 (Ser54) is a Phosphoserine.

This sequence belongs to the universal ribosomal protein uL30 family.

This Pongo abelii (Sumatran orangutan) protein is Large ribosomal subunit protein uL30-like 1 (RPL7L1).